The chain runs to 270 residues: Putative pyruvate, phosphate dikinase regulatory protein (270 aa).

151-158 (GVSRTSKT) is an ADP binding site.

Belongs to the pyruvate, phosphate/water dikinase regulatory protein family. PDRP subfamily.

It carries out the reaction N(tele)-phospho-L-histidyl/L-threonyl-[pyruvate, phosphate dikinase] + ADP = N(tele)-phospho-L-histidyl/O-phospho-L-threonyl-[pyruvate, phosphate dikinase] + AMP + H(+). The enzyme catalyses N(tele)-phospho-L-histidyl/O-phospho-L-threonyl-[pyruvate, phosphate dikinase] + phosphate + H(+) = N(tele)-phospho-L-histidyl/L-threonyl-[pyruvate, phosphate dikinase] + diphosphate. In terms of biological role, bifunctional serine/threonine kinase and phosphorylase involved in the regulation of the pyruvate, phosphate dikinase (PPDK) by catalyzing its phosphorylation/dephosphorylation. This Bacillus subtilis (strain 168) protein is Putative pyruvate, phosphate dikinase regulatory protein (yqfL).